We begin with the raw amino-acid sequence, 132 residues long: uncharacterized protein (132 aa).

This is an uncharacterized protein from Gallus gallus (Chicken).